The sequence spans 174 residues: uncharacterized protein (174 aa).

This is an uncharacterized protein from Dictyostelium discoideum (Social amoeba).